The following is a 455-amino-acid chain: Protein 60A (455 aa).

An N-terminal signal peptide occupies residues 1 to 36 (MSGLRNTSEAVAVLASLGLGMVLLMFVATTPPAVEA). A propeptide spanning residues 37–335 (TQSGIYIDNG…SASHPRKRKK (299 aa)) is cleaved from the precursor. The span at 108 to 118 (GLSDQDEDDDY) shows a compositional bias: acidic residues. The disordered stretch occupies residues 108–138 (GLSDQDEDDDYERGHRSRRSADLEEDEGEQQ). N-linked (GlcNAc...) asparagine glycans are attached at residues Asn238 and Asn250. Positions 316–345 (AHSSHHRSKRSASHPRKRKKSVSPNNVPLL) are disordered. Over residues 318–336 (SSHHRSKRSASHPRKRKKS) the composition is skewed to basic residues. Intrachain disulfides connect Cys354–Cys420, Cys383–Cys452, and Cys387–Cys454. Asn396 is a glycosylation site (N-linked (GlcNAc...) asparagine).

Belongs to the TGF-beta family. As to quaternary structure, homodimer; disulfide-linked. Interacts with nord and dpp. As to expression, expressed in cells of the developing foregut and hindgut during germ band retraction and later embryonic stages. Expressed in the wing disk, mainly in the posterior compartment in the pteropleural and medial regions extending into the progenitors of the scutellum. High levels are found within the posterior and anterior compartments of the wing pouch and low levels in the hinge region. In the eye/antennal disk, expression is highest anterior to the morphogenetic furrow and in the medial regions with lower levels of expression posterior to the morphogenetic furrow. Expressed throughout the posterior compartment of the leg imaginal disks and within the ventral anterior compartment.

Its subcellular location is the secreted. Its function is as follows. Required for the growth of imaginal tissues and for patterning of the adult wing. This is Protein 60A (gbb) from Drosophila melanogaster (Fruit fly).